The primary structure comprises 243 residues: 6-carboxyhexanoate--CoA ligase (243 aa).

The protein belongs to the BioW family. In terms of assembly, homodimer. Mg(2+) serves as cofactor.

The catalysed reaction is heptanedioate + ATP + CoA = 6-carboxyhexanoyl-CoA + AMP + diphosphate. It functions in the pathway metabolic intermediate metabolism; pimeloyl-CoA biosynthesis; pimeloyl-CoA from pimelate: step 1/1. Catalyzes the transformation of pimelate into pimeloyl-CoA with concomitant hydrolysis of ATP to AMP. This chain is 6-carboxyhexanoate--CoA ligase, found in Thermocrinis albus (strain DSM 14484 / JCM 11386 / HI 11/12).